We begin with the raw amino-acid sequence, 354 residues long: Guanine nucleotide-binding protein G(i) subunit alpha-1 (354 aa).

The N-myristoyl glycine moiety is linked to residue Gly2. The S-palmitoyl cysteine moiety is linked to residue Cys3. The G-alpha domain maps to 32–354; the sequence is REVKLLLLGA…KNNLKDCGLF (323 aa). The segment at 35–48 is G1 motif; that stretch reads KLLLLGAGESGKST. GTP-binding positions include 43-48, 150-151, and 175-178; these read ESGKST, DS, and LRTR. Ser47 contributes to the Mg(2+) binding site. Residues 173–181 form a G2 motif region; sequence DVLRTRVKT. Residue Thr181 participates in Mg(2+) binding. Residues 196–205 form a G3 motif region; sequence FKMFDVGGQR. GTP is bound by residues 200–204, 269–272, and Ala326; these read DVGGQ and NKKD. Residues 265–272 form a G4 motif region; the sequence is ILFLNKKD. The interval 324–329 is G5 motif; the sequence is TCATDT.

The protein belongs to the G-alpha family. G(i/o/t/z) subfamily. Heterotrimeric G proteins are composed of 3 units; alpha, beta and gamma. The alpha chain contains the guanine nucleotide binding site. Part of a spindle orientation complex. Identified in complex with the beta subunit GNB1 and the gamma subunit GNG1. Identified in complex with the beta subunit GNB1 and the gamma subunit GNG2. GTP binding causes dissociation of the heterotrimer, liberating the individual subunits so that they can interact with downstream effector proteins. Myristoylation at Gly-2 is required for membrane anchoring before palmitoylation. In terms of processing, palmitoylation at Cys-3 varies with membrane lipid composition.

Its subcellular location is the nucleus. It is found in the cytoplasm. The protein resides in the cell membrane. The protein localises to the cytoskeleton. It localises to the microtubule organizing center. Its subcellular location is the centrosome. It is found in the cell cortex. The protein resides in the membrane. The enzyme catalyses GTP + H2O = GDP + phosphate + H(+). Guanine nucleotide-binding proteins (G proteins) function as transducers downstream of G protein-coupled receptors (GPCRs) in numerous signaling cascades. The alpha chain contains the guanine nucleotide binding site and alternates between an active, GTP-bound state and an inactive, GDP-bound state. Signaling by an activated GPCR promotes GDP release and GTP binding. The alpha subunit has a low GTPase activity that converts bound GTP to GDP, thereby terminating the signal. Both GDP release and GTP hydrolysis are modulated by numerous regulatory proteins. Signaling is mediated via effector proteins, such as adenylate cyclase. Inhibits adenylate cyclase activity, leading to decreased intracellular cAMP levels. Required for cortical dynein-dynactin complex recruitment during metaphase. This chain is Guanine nucleotide-binding protein G(i) subunit alpha-1 (gnai1), found in Oryzias latipes (Japanese rice fish).